The sequence spans 677 residues: Probable serine/threonine-protein kinase mkcF (677 aa).

Positions 1 to 58 constitute an SH3 domain; it reads MLYLVATGDYKGPSENHLSFTKGQRIEFLERTENGFIKGKLDGKVGIFPSSLITIETR. The disordered stretch occupies residues 72–244; the sequence is TETKDDTGSI…SSSSSSTKRR (173 aa). Low complexity predominate over residues 79–94; sequence GSISSSTSTSTSSLTT. Over residues 105–126 the composition is skewed to polar residues; the sequence is GEQQPSTSTINGQSSSTSPILQ. Positions 127-146 are enriched in low complexity; that stretch reads SNGTTNTTTSSTSNNNIGDN. The span at 158 to 174 shows a compositional bias: polar residues; the sequence is TTSNHSKSASRLSVASF. Low complexity predominate over residues 175 to 192; the sequence is STTTTATTTTTTTTTATS. Residues 209-224 show a composition bias toward basic and acidic residues; that stretch reads DKKSKDDDKSEKEGLY. Residues 230-240 show a composition bias toward low complexity; that stretch reads SSSSSSSSSSS. The 246-residue stretch at 401–646 folds into the Protein kinase domain; the sequence is IKFTHMVGRG…VDKLMRHPFF (246 aa). ATP-binding positions include 407 to 415 and lysine 428; that span reads VGRGQYGKV. Catalysis depends on aspartate 519, which acts as the Proton acceptor.

It belongs to the protein kinase superfamily. Ser/Thr protein kinase family. STE20 subfamily. Mg(2+) serves as cofactor.

The enzyme catalyses L-seryl-[protein] + ATP = O-phospho-L-seryl-[protein] + ADP + H(+). The catalysed reaction is L-threonyl-[protein] + ATP = O-phospho-L-threonyl-[protein] + ADP + H(+). The chain is Probable serine/threonine-protein kinase mkcF from Dictyostelium discoideum (Social amoeba).